Here is a 379-residue protein sequence, read N- to C-terminus: RIB43A-like with coiled-coils protein 1 (379 aa).

The tract at residues 1 to 21 (MYNIKQSTDTKEAAAIEARRN) is disordered. Over residues 8 to 21 (TDTKEAAAIEARRN) the composition is skewed to basic and acidic residues. Coiled coils occupy residues 82-111 (KEEA…GREF) and 216-304 (NANK…QAEK).

The protein belongs to the RIB43A family. Microtubule inner protein component of sperm flagellar doublet microtubules.

The protein resides in the cytoplasm. The protein localises to the cytoskeleton. It is found in the flagellum axoneme. The protein is RIB43A-like with coiled-coils protein 1 (RIBC1) of Homo sapiens (Human).